Reading from the N-terminus, the 356-residue chain is DNA polymerase IV (356 aa).

A UmuC domain is found at 6–187 (IIHIDMDYFF…LDIGDFPGVG (182 aa)). Mg(2+) contacts are provided by aspartate 10 and aspartate 105. Residue glutamate 106 is part of the active site.

This sequence belongs to the DNA polymerase type-Y family. As to quaternary structure, monomer. Mg(2+) is required as a cofactor.

It is found in the cytoplasm. The catalysed reaction is DNA(n) + a 2'-deoxyribonucleoside 5'-triphosphate = DNA(n+1) + diphosphate. In terms of biological role, poorly processive, error-prone DNA polymerase involved in untargeted mutagenesis. Copies undamaged DNA at stalled replication forks, which arise in vivo from mismatched or misaligned primer ends. These misaligned primers can be extended by PolIV. Exhibits no 3'-5' exonuclease (proofreading) activity. May be involved in translesional synthesis, in conjunction with the beta clamp from PolIII. This chain is DNA polymerase IV, found in Staphylococcus aureus (strain COL).